The chain runs to 190 residues: Ras-related protein RabF1 (190 aa).

15–22 (GDSGVGKT) provides a ligand contact to GTP. Residues 37-44 (HITIGIEF) carry the Effector region motif. GTP is bound by residues 62-66 (DTAGE) and 119-122 (NKND). C187 is subject to Cysteine methyl ester. C187 carries the S-geranylgeranyl cysteine lipid modification. A propeptide spans 188 to 190 (IIN) (removed in mature form).

This sequence belongs to the small GTPase superfamily. Rab family.

The protein localises to the cell membrane. This chain is Ras-related protein RabF1 (rabF1-1), found in Dictyostelium discoideum (Social amoeba).